Here is a 575-residue protein sequence, read N- to C-terminus: MSRGLELLIAQTILQGFDAQYGRFLEVTSGAQQRFEQADWHAVQQAMKSRIHLYDHHVGLVVEQLRCITDGKSTDAAFLLRVKEHYTRLLPDYPRFEIAESFFNSVYCRLFDHRSLTPERLFIFSSQPERRFRTIPRPLAKDFFPDHGWEPLLTRILSDLPLRLPWQNKSRDIHYIIAHLTETFGAEALHRSHLQVANELFYRNKAAWLVGKLLTPAGTLPFLLPIHRTDEGELFVDTCLTTTAEASIVFGFARSYFMVYAPLPAALVEWLREILPGKTTAELYMAIGCQKHAKTESYREYLLYLANSDEQFIEAPGIRGMVMLVFTLPGFDRVFKIIKDRFAPQKEMSAAHVRACYQLVKEHDRVGRMADTQEFENFVLEKRRIAPALMTLLRQEAPEKIIDLGDQIVIRHLYIERRMVPLNIWLEQVEGQQLRDAIEEYGNAIRQLAAANIFPGDMLFKNFGVTRHGRVVFYDYDEICYMTEVNFRDIPQARYPEDELASEPWYSVSPGDVFPEEFRHWLCADPRIGPLFEEMHADLFRADYWRALQTRIREGHVEDVYAYRRKQRFCFRFAA.

Residues 315-321 (APGIRGM) and K336 contribute to the ATP site. D371 is a catalytic residue.

Belongs to the AceK family.

It is found in the cytoplasm. It carries out the reaction L-seryl-[isocitrate dehydrogenase] + ATP = O-phospho-L-seryl-[isocitrate dehydrogenase] + ADP + H(+). Its function is as follows. Bifunctional enzyme which can phosphorylate or dephosphorylate isocitrate dehydrogenase (IDH) on a specific serine residue. This is a regulatory mechanism which enables bacteria to bypass the Krebs cycle via the glyoxylate shunt in response to the source of carbon. When bacteria are grown on glucose, IDH is fully active and unphosphorylated, but when grown on acetate or ethanol, the activity of IDH declines drastically concomitant with its phosphorylation. The chain is Isocitrate dehydrogenase kinase/phosphatase from Citrobacter koseri (strain ATCC BAA-895 / CDC 4225-83 / SGSC4696).